We begin with the raw amino-acid sequence, 899 residues long: Protein translocase subunit SecA (899 aa).

ATP contacts are provided by residues Gln87, 105 to 109, and Asp516; that span reads GEGKT. Residues Cys884, Cys886, Cys895, and His896 each coordinate Zn(2+).

This sequence belongs to the SecA family. In terms of assembly, monomer and homodimer. Part of the essential Sec protein translocation apparatus which comprises SecA, SecYEG and auxiliary proteins SecDF. Other proteins may also be involved. The cofactor is Zn(2+).

It localises to the cell inner membrane. The protein localises to the cytoplasm. It carries out the reaction ATP + H2O + cellular proteinSide 1 = ADP + phosphate + cellular proteinSide 2.. Its function is as follows. Part of the Sec protein translocase complex. Interacts with the SecYEG preprotein conducting channel. Has a central role in coupling the hydrolysis of ATP to the transfer of proteins into and across the cell membrane, serving as an ATP-driven molecular motor driving the stepwise translocation of polypeptide chains across the membrane. The protein is Protein translocase subunit SecA of Borreliella burgdorferi (strain ZS7) (Borrelia burgdorferi).